A 355-amino-acid chain; its full sequence is Ataxin-3 (355 aa).

Residue Met1 forms a Peptide (Met-Gly) (interchain with G-Cter in ubiquitin) linkage. Residues 1–180 enclose the Josephin domain; that stretch reads MESIFHEKQE…DCEADQLLQM (180 aa). Cys14 acts as the Nucleophile in catalysis. His119 (proton acceptor) is an active-site residue. Asn134 is an active-site residue. Lys200 is covalently cross-linked (Glycyl lysine isopeptide (Lys-Gly) (interchain with G-Cter in ubiquitin)). 2 UIM domains span residues 224–243 and 244–263; these read DDED…IDME and DEEA…SSRG. The interval 257–333 is disordered; that stretch reads MQGSSRGMCE…AGNAMSEEDV (77 aa). Ser268, Ser272, and Ser273 each carry phosphoserine. Positions 279–301 are enriched in basic and acidic residues; the sequence is EELRKRREAYFEKQQHQQQEADR. The span at 312–326 shows a compositional bias: polar residues; it reads PTTSSGGLRSNQAGN. Ser321 is modified (phosphoserine). In terms of domain architecture, UIM 3 spans 329–348; sequence SEEDVLRATVTVSLETAKDS.

In terms of assembly, interacts with STUB1/CHIP (when monoubiquitinated). Interacts with DNA repair proteins RAD23A and RAD23B. Interacts with BECN1 (via its poly-Gln domain). Interacts with PRKN, UBR2, VCP and tubulin. Post-translationally, monoubiquitinated by UBE2W, possibly leading to activate the deubiquitinating enzyme activity. In terms of tissue distribution, ubiquitously expressed.

The protein resides in the nucleus matrix. The protein localises to the nucleus. It localises to the lysosome membrane. It catalyses the reaction Thiol-dependent hydrolysis of ester, thioester, amide, peptide and isopeptide bonds formed by the C-terminal Gly of ubiquitin (a 76-residue protein attached to proteins as an intracellular targeting signal).. Functionally, deubiquitinating enzyme involved in protein homeostasis maintenance, transcription, cytoskeleton regulation, myogenesis and degradation of misfolded chaperone substrates. Binds long polyubiquitin chains and trims them, while it has weak or no activity against chains of 4 or less ubiquitins. Involved in degradation of misfolded chaperone substrates via its interaction with STUB1/CHIP: recruited to monoubiquitinated STUB1/CHIP, and restricts the length of ubiquitin chain attached to STUB1/CHIP substrates and preventing further chain extension. Interacts with key regulators of transcription and represses transcription: acts as a histone-binding protein that regulates transcription. Acts as a negative regulator of mTORC1 signaling in response to amino acid deprivation by mediating deubiquitination of RHEB, thereby promoting RHEB inactivation by the TSC-TBC complex. Regulates autophagy via the deubiquitination of 'Lys-402' of BECN1 leading to the stabilization of BECN1. This chain is Ataxin-3 (Atxn3), found in Rattus norvegicus (Rat).